Reading from the N-terminus, the 126-residue chain is Copper resistance protein C (126 aa).

The N-terminal stretch at 1 to 23 (MSILNKAILTGGLVMGVAFSAMA) is a signal peptide. Histidine 24 lines the Cu(2+) pocket. Methionine 63, methionine 66, methionine 69, histidine 72, and methionine 75 together coordinate Cu(+). Histidine 115 lines the Cu(2+) pocket.

Belongs to the CopC family. As to quaternary structure, monomer-dimer equilibrium in solution for the apo protein. Dimerization is significantly enhanced upon binding of copper(I).

The protein resides in the periplasm. Its function is as follows. Copper-binding protein involved in copper resistance. This is Copper resistance protein C from Escherichia coli.